Consider the following 202-residue polypeptide: ATP-dependent Clp protease proteolytic subunit (202 aa).

Ser-106 serves as the catalytic Nucleophile. His-131 is an active-site residue.

The protein belongs to the peptidase S14 family. Fourteen ClpP subunits assemble into 2 heptameric rings which stack back to back to give a disk-like structure with a central cavity, resembling the structure of eukaryotic proteasomes.

It is found in the cytoplasm. It catalyses the reaction Hydrolysis of proteins to small peptides in the presence of ATP and magnesium. alpha-casein is the usual test substrate. In the absence of ATP, only oligopeptides shorter than five residues are hydrolyzed (such as succinyl-Leu-Tyr-|-NHMec, and Leu-Tyr-Leu-|-Tyr-Trp, in which cleavage of the -Tyr-|-Leu- and -Tyr-|-Trp bonds also occurs).. Cleaves peptides in various proteins in a process that requires ATP hydrolysis. Has a chymotrypsin-like activity. Plays a major role in the degradation of misfolded proteins. The protein is ATP-dependent Clp protease proteolytic subunit of Methylibium petroleiphilum (strain ATCC BAA-1232 / LMG 22953 / PM1).